A 240-amino-acid polypeptide reads, in one-letter code: Rho GDP-dissociation inhibitor 1 (240 aa).

Residues 1-66 are disordered; that stretch reads MSLVSGARDM…DDDSKLQLGP (66 aa).

The protein belongs to the Rho GDI family. As to quaternary structure, interacts with RAC-like GTP binding proteins ARAC5/ROP4 and ARAC3/ROP6.

It is found in the cytoplasm. Regulates the GDP/GTP exchange reaction of the Rho proteins by inhibiting the dissociation of GDP from them, and the subsequent binding of GTP to them. In Arabidopsis thaliana (Mouse-ear cress), this protein is Rho GDP-dissociation inhibitor 1 (GDI1).